A 451-amino-acid polypeptide reads, in one-letter code: Chromosomal replication initiator protein DnaA (451 aa).

The interval 1–72 (MQSIEDIWQE…ANILQEITGR (72 aa)) is domain I, interacts with DnaA modulators. Positions 72–108 (RLFDVRFIDGEQEENFEYTVIKPNPALDEDGVEIGKH) are domain II. A domain III, AAA+ region region spans residues 109–325 (MLNPRYVFDT…GALIRVVAYS (217 aa)). 4 residues coordinate ATP: G153, G155, K156, and T157. Residues 326 to 451 (SLVNKDITAG…KNLRKAQNMF (126 aa)) form a domain IV, binds dsDNA region.

This sequence belongs to the DnaA family. As to quaternary structure, oligomerizes as a right-handed, spiral filament on DNA at oriC.

Its subcellular location is the cytoplasm. Its function is as follows. Plays an essential role in the initiation and regulation of chromosomal replication. ATP-DnaA binds to the origin of replication (oriC) to initiate formation of the DNA replication initiation complex once per cell cycle. Binds the DnaA box (a 9 base pair repeat at the origin) and separates the double-stranded (ds)DNA. Forms a right-handed helical filament on oriC DNA; dsDNA binds to the exterior of the filament while single-stranded (ss)DNA is stabiized in the filament's interior. The ATP-DnaA-oriC complex binds and stabilizes one strand of the AT-rich DNA unwinding element (DUE), permitting loading of DNA polymerase. After initiation quickly degrades to an ADP-DnaA complex that is not apt for DNA replication. Binds acidic phospholipids. The sequence is that of Chromosomal replication initiator protein DnaA from Listeria monocytogenes serotype 4b (strain CLIP80459).